Here is a 285-residue protein sequence, read N- to C-terminus: Taffazin (285 aa).

Topologically, residues 1–23 (MDSNNSNNNNKNLKQICDIPKPQ) are mitochondrial intermembrane. The stretch at 24 to 42 (FLSKGVFTLVGVLCKFWIS) is an intramembrane region. At 43–285 (MNTVTTSGID…GRFSHPTIKD (243 aa)) the chain is on the mitochondrial intermembrane side. The HXXXXD motif signature appears at 74–79 (HSSNLD).

The protein belongs to the taffazin family.

It is found in the mitochondrion outer membrane. The protein resides in the mitochondrion inner membrane. It catalyses the reaction a 1-acyl-sn-glycero-3-phosphate + a 1,2-diacyl-sn-glycero-3-phospho-(1'-sn-glycerol) = 1-acyl-sn-glycero-3-phospho-(1'-sn-glycerol) + a 1,2-diacyl-sn-glycero-3-phosphate. The catalysed reaction is 1-hexadecanoyl-2-(9Z,12Z-octadecadienoyl)-sn-glycero-3-phospho-(1'-sn-glycerol) + 1-(9Z-octadecenoyl)-sn-glycero-3-phosphate = 1-(9Z)-octadecenoyl-2-(9Z,12Z)-octadecadienoyl-sn-glycero-3-phosphate + 1-hexadecanoyl-sn-glycero-3-phospho-(1'-sn-glycerol). It carries out the reaction 1'-[1,2-diacyl-sn-glycero-3-phospho],3'-[1-acyl-sn-glycero-3-phospho]-glycerol + a 1,2-diacyl-sn-glycero-3-phosphocholine = a cardiolipin + a 1-acyl-sn-glycero-3-phosphocholine. The enzyme catalyses 1-hexadecanoyl-2-(9Z,12Z-octadecadienoyl)-sn-glycero-3-phosphocholine + 1-hexadecanoyl-sn-glycero-3-phosphocholine = 2-(9Z,12Z-octadecadienoyl)-sn-glycero-3-phosphocholine + 1,2-dihexadecanoyl-sn-glycero-3-phosphocholine. It catalyses the reaction 1,2-di-(9Z-octadecenoyl)-sn-glycero-3-phosphocholine + 1-hexadecanoyl-sn-glycero-3-phosphocholine = 1-hexadecanoyl-2-(9Z-octadecenoyl)-sn-glycero-3-phosphocholine + 1-(9Z-octadecenoyl)-sn-glycero-3-phosphocholine. It participates in phospholipid metabolism. Its function is as follows. Acyltransferase required to remodel newly synthesized phospholipid cardiolipin (1',3'-bis-[1,2-diacyl-sn-glycero-3-phospho]-glycerol or CL), a key component of the mitochondrial inner membrane, with tissue specific acyl chains necessary for adequate mitochondrial function. Its role in cellular physiology is to improve mitochondrial performance. CL is critical for the coassembly of lipids and proteins in mitochondrial membranes, for instance, remodeling of the acyl groups of CL in the mitochondrial inner membrane affects the assembly and stability of respiratory chain complex IV and its supercomplex forms. Catalyzes the transacylation between phospholipids and lysophospholipids, with the highest rate being between phosphatidylcholine (1,2-diacyl-sn-glycero-3-phosphocholine or PC) and CL. Catalyzes both 1-acyl-sn-glycero-3-phosphocholine (lysophosphatidylcholine or LPC) reacylation and PC-CL transacylation, that means, it exchanges acyl groups between CL and PC by a combination of forward and reverse transacylations. Also catalyzes transacylations between other phospholipids such as phosphatidylethanolamine (1,2-diacyl-sn-glycero-3-phosphoethanolamine or PE) and CL, between PC and PE, and between PC and phosphatidate (1,2-diacyl-sn-glycero-3-phosphate or PA), although at lower rate. Not regiospecific, it transfers acyl groups into any of the sn-1 and sn-2 positions of the monolysocardiolipin (MLCL), which is an important prerequisite for uniformity and symmetry in CL acyl distribution. Cannot transacylate dilysocardiolipin (DLCL), thus, the role of MLCL is limited to that of an acyl acceptor. CoA-independent, it can reshuffle molecular species within a single phospholipid class. Redistributes fatty acids between MLCL, CL, and other lipids, which prolongs the half-life of CL. Its action is completely reversible, which allows for cyclic changes, such as fission and fusion or bending and flattening of the membrane. Hence, by contributing to the flexibility of the lipid composition, it plays an important role in the dynamics of mitochondria membranes. This chain is Taffazin (taz), found in Dictyostelium discoideum (Social amoeba).